Consider the following 242-residue polypeptide: Ribonuclease 3 (242 aa).

Residues 12-139 (ANELLEALGT…LIGATFLEHG (128 aa)) enclose the RNase III domain. Mg(2+) is bound at residue E51. The active site involves D55. The Mg(2+) site is built by D125 and E128. Residue E128 is part of the active site. Residues 165–236 (LDWKTSLTVK…AEAGWKSLDS (72 aa)) enclose the DRBM domain.

Belongs to the ribonuclease III family. Homodimer. Requires Mg(2+) as cofactor.

It is found in the cytoplasm. The catalysed reaction is Endonucleolytic cleavage to 5'-phosphomonoester.. In terms of biological role, digests double-stranded RNA. Involved in the processing of primary rRNA transcript to yield the immediate precursors to the large and small rRNAs (23S and 16S). Processes some mRNAs, and tRNAs when they are encoded in the rRNA operon. Processes pre-crRNA and tracrRNA of type II CRISPR loci if present in the organism. The protein is Ribonuclease 3 of Bifidobacterium longum (strain NCC 2705).